The primary structure comprises 1025 residues: Serine/threonine-protein kinase TAO2 (1025 aa).

The Protein kinase domain occupies 28-281 (FADLREIGHG…SDMLLKHRFL (254 aa)). Residues 34–42 (IGHGSFGAV) and K57 each bind ATP. Residue D151 is the Proton acceptor of the active site. Positions 349–373 (ESSQSVPSMSISASSQSSSVNSLAD) are enriched in low complexity. The interval 349–377 (ESSQSVPSMSISASSQSSSVNSLADASDD) is disordered. Coiled coils occupy residues 457–650 (SALR…ECAM) and 755–876 (ILKR…EIEA). 2 disordered regions span residues 899–930 (FNQG…QNTG) and 945–1025 (SASW…LSYS). The segment covering 905–914 (APPPGWPSRP) has biased composition (pro residues). Residues 947–986 (SWGLHPPGSSSSLSALPSSSSSSSSSPSSSSGGRPGLLLL) show a composition bias toward low complexity. Positions 1007–1025 (SRSTSVTSQLSNGSHLSYS) are enriched in polar residues.

It belongs to the protein kinase superfamily. STE Ser/Thr protein kinase family. STE20 subfamily. It depends on Mg(2+) as a cofactor.

It catalyses the reaction L-seryl-[protein] + ATP = O-phospho-L-seryl-[protein] + ADP + H(+). It carries out the reaction L-threonyl-[protein] + ATP = O-phospho-L-threonyl-[protein] + ADP + H(+). In terms of biological role, serine/threonine-protein kinase involved in different processes such as apoptotic morphological changes, MAPK8/JNK and MAPK14/p38 MAPK signaling pathway. Functionally, activates the JNK MAP kinase pathway. The protein is Serine/threonine-protein kinase TAO2 (taok2) of Xenopus laevis (African clawed frog).